A 245-amino-acid polypeptide reads, in one-letter code: Uridylate kinase (245 aa).

Residue 12-15 (KISG) coordinates ATP. G55 is a binding site for UMP. 2 residues coordinate ATP: G56 and R60. UMP-binding positions include D76 and 137–144 (AGAPYLTT). 3 residues coordinate ATP: T164, Y171, and D174.

The protein belongs to the UMP kinase family. As to quaternary structure, homohexamer.

The protein resides in the cytoplasm. The enzyme catalyses UMP + ATP = UDP + ADP. It functions in the pathway pyrimidine metabolism; CTP biosynthesis via de novo pathway; UDP from UMP (UMPK route): step 1/1. With respect to regulation, inhibited by UTP. Its function is as follows. Catalyzes the reversible phosphorylation of UMP to UDP. The protein is Uridylate kinase of Chlamydia muridarum (strain MoPn / Nigg).